The primary structure comprises 182 residues: Constitutive photomorphogenesis protein 10 (182 aa).

The UBC core domain occupies 36–182; the sequence is ASGKRIQREM…AKEWTLRFAK (147 aa).

This sequence belongs to the ubiquitin-conjugating enzyme family. In terms of assembly, component of the CDD complex, at least composed of COP10, DET1 and DDB1A. Interacts with E3 ubiquitin ligase COP1. Interacts with E2 ubiquitin conjugating UBC5. Interacts with CSN3, CSN4 and CSN8 subunits of the COP9 complex. As to expression, expressed in flower, leaf, stem and seedling. Expressed at lower level in root.

It is found in the nucleus. Its function is as follows. Component of light signal transduction machinery. Involved in repression of photomorphogenesis in darkness by participating in the CDD complex, a complex probably required to regulate the activity of ubiquitin conjugating enzymes (E2s). Repression of photomorphogenesis is probably mediated by ubiquitination and subsequent degradation of photomorphogenesis-promoting factors such as HY5, HYH and LAF1. Although strongly related to ubiquitin-conjugating enzyme, it has no catalytic activity by itself due to the absence of the conserved Cys active site at position 120. It can however enhance the activity of E2 conjugating enzymes. This is Constitutive photomorphogenesis protein 10 (COP10) from Arabidopsis thaliana (Mouse-ear cress).